Here is a 185-residue protein sequence, read N- to C-terminus: Prenylated Rab acceptor protein 1 (185 aa).

The Cytoplasmic segment spans residues 1–78 (MAAQKDQQKD…RNVEYYQSNY (78 aa)). The tract at residues 30–54 (AGREWLERRRATIRPWGTFVDQQRF) is required for interaction with prenylated RAB3A and VAMP2. The next 2 helical transmembrane spans lie at 79–94 (VFVF…VTSP) and 95–112 (MLLV…ILYL). Residues 113–131 (RTLQSKLVLFGREVSPAHQ) lie on the Cytoplasmic side of the membrane. Transmembrane regions (helical) follow at residues 132–148 (YALA…LAGA) and 149–165 (GSAV…LIGS). Residues 165–185 (SHAAFHQMEPADGEELQMEPV) are required for interaction with GDI1. Residues 166–185 (HAAFHQMEPADGEELQMEPV) lie on the Cytoplasmic side of the membrane. Residues 175-185 (ADGEELQMEPV) are required for interaction with prenylated RAB3A and VAMP2. The segment at 175-185 (ADGEELQMEPV) is homodimerization.

The protein belongs to the PRA1 family. Homodimer. Interacts with VAMP2 (synaptobrevin-2), GDI1, NRDG1 and PCLO. Interacts with prenylated Rab proteins (including RAB5 and RAB6), and with the members of the Ras superfamily HRAS, RHOA, TC21, and RAP1A.

The protein resides in the cell membrane. Its subcellular location is the cytoplasm. It is found in the golgi apparatus. It localises to the cytoplasmic vesicle. The protein localises to the secretory vesicle. The protein resides in the synaptic vesicle. Functionally, general Rab protein regulator required for vesicle formation from the Golgi complex. May control vesicle docking and fusion by mediating the action of Rab GTPases to the SNARE complexes. In addition it inhibits the removal of Rab GTPases from the membrane by GDI1. The sequence is that of Prenylated Rab acceptor protein 1 (Rabac1) from Mus musculus (Mouse).